Reading from the N-terminus, the 484-residue chain is tRNA sulfurtransferase (484 aa).

A THUMP domain is found at 56–158; sequence NCLKKALSKV…GNRAYFYTEV (103 aa). ATP contacts are provided by residues 176–177, lysine 257, glycine 279, and glutamine 288; that span reads LV. A disulfide bond links cysteine 336 and cysteine 444. The region spanning 396-479 is the Rhodanese domain; sequence APEGAVIVDL…TRNAVPPSSQ (84 aa). The active-site Cysteine persulfide intermediate is cysteine 444.

The protein belongs to the ThiI family.

The protein resides in the cytoplasm. It catalyses the reaction [ThiI sulfur-carrier protein]-S-sulfanyl-L-cysteine + a uridine in tRNA + 2 reduced [2Fe-2S]-[ferredoxin] + ATP + H(+) = [ThiI sulfur-carrier protein]-L-cysteine + a 4-thiouridine in tRNA + 2 oxidized [2Fe-2S]-[ferredoxin] + AMP + diphosphate. The enzyme catalyses [ThiS sulfur-carrier protein]-C-terminal Gly-Gly-AMP + S-sulfanyl-L-cysteinyl-[cysteine desulfurase] + AH2 = [ThiS sulfur-carrier protein]-C-terminal-Gly-aminoethanethioate + L-cysteinyl-[cysteine desulfurase] + A + AMP + 2 H(+). It functions in the pathway cofactor biosynthesis; thiamine diphosphate biosynthesis. Functionally, catalyzes the ATP-dependent transfer of a sulfur to tRNA to produce 4-thiouridine in position 8 of tRNAs, which functions as a near-UV photosensor. Also catalyzes the transfer of sulfur to the sulfur carrier protein ThiS, forming ThiS-thiocarboxylate. This is a step in the synthesis of thiazole, in the thiamine biosynthesis pathway. The sulfur is donated as persulfide by IscS. This chain is tRNA sulfurtransferase, found in Pyrobaculum aerophilum (strain ATCC 51768 / DSM 7523 / JCM 9630 / CIP 104966 / NBRC 100827 / IM2).